Here is a 461-residue protein sequence, read N- to C-terminus: Cysteine--tRNA ligase (461 aa).

Residue Cys30 participates in Zn(2+) binding. The 'HIGH' region signature appears at 32-42 (VTIYDLCHIGH). 3 residues coordinate Zn(2+): Cys211, His236, and Glu240. The short motif at 268 to 272 (KMSKS) is the 'KMSKS' region element. Residue Lys271 coordinates ATP.

This sequence belongs to the class-I aminoacyl-tRNA synthetase family. Monomer. The cofactor is Zn(2+).

The protein localises to the cytoplasm. The catalysed reaction is tRNA(Cys) + L-cysteine + ATP = L-cysteinyl-tRNA(Cys) + AMP + diphosphate. This Shewanella sp. (strain W3-18-1) protein is Cysteine--tRNA ligase.